The primary structure comprises 140 residues: Cysteine protease inhibitor 6 (140 aa).

A disulfide bridge connects residues C103 and C109.

The protein belongs to the protease inhibitor I3 (leguminous Kunitz-type inhibitor) family.

It is found in the vacuole. Its function is as follows. Inhibitor of cysteine proteases. May protect the plant by inhibiting proteases of invading organisms. This is Cysteine protease inhibitor 6 from Solanum tuberosum (Potato).